The sequence spans 367 residues: Molybdopterin synthase catalytic subunit (367 aa).

Substrate contacts are provided by residues 101–102 (HR), Lys117, and 124–126 (KKE).

The protein belongs to the MoaE family. MOCS2B subfamily. In terms of assembly, heterotetramer; composed of 2 small (Mocs2A) and 2 large (Mocs2B) subunits.

The protein resides in the cytoplasm. The enzyme catalyses 2 [molybdopterin-synthase sulfur-carrier protein]-C-terminal-Gly-aminoethanethioate + cyclic pyranopterin phosphate + H2O = molybdopterin + 2 [molybdopterin-synthase sulfur-carrier protein]-C-terminal Gly-Gly + 2 H(+). It functions in the pathway cofactor biosynthesis; molybdopterin biosynthesis. Catalytic subunit of the molybdopterin synthase complex, a complex that catalyzes the conversion of precursor Z into molybdopterin. Acts by mediating the incorporation of 2 sulfur atoms from thiocarboxylated Mocs2A into precursor Z to generate a dithiolene group. The protein is Molybdopterin synthase catalytic subunit of Drosophila erecta (Fruit fly).